We begin with the raw amino-acid sequence, 219 residues long: 16S rRNA (adenine(1408)-N(1))-methyltransferase (219 aa).

Residues glycine 32, asparagine 38, aspartate 55, 87-88 (AE), 104-109 (LFPWGT), and 195-197 (SLW) contribute to the S-adenosyl-L-methionine site.

Belongs to the methyltransferase superfamily. Kanamycin-apramycin resistance family.

It carries out the reaction adenosine(1408) in 16S rRNA + S-adenosyl-L-methionine = N(1)-methyladenosine(1408) in 16S rRNA + S-adenosyl-L-homocysteine + H(+). In terms of biological role, specifically methylates the N(1) position of adenine 1408 in 16S rRNA. Confers resistance to various aminoglycosides, including kanamycin, neomycin, apramycin, ribostamycin and gentamicin. Methylates only fully assembled 30S subunits. This Escherichia coli protein is 16S rRNA (adenine(1408)-N(1))-methyltransferase (npmA).